Reading from the N-terminus, the 306-residue chain is Tyrosine recombinase XerC (306 aa).

A Core-binding (CB) domain is found at 1–90 (MYVHIDNFLV…AWRSFYRYLY (90 aa)). The Tyr recombinase domain occupies 111-298 (RLPRFLYEDE…TGERLKKVYR (188 aa)). Active-site residues include R151, K175, H250, R253, and H276. The O-(3'-phospho-DNA)-tyrosine intermediate role is filled by Y285.

Belongs to the 'phage' integrase family. XerC subfamily. In terms of assembly, forms a cyclic heterotetrameric complex composed of two molecules of XerC and two molecules of XerD.

The protein localises to the cytoplasm. Functionally, site-specific tyrosine recombinase, which acts by catalyzing the cutting and rejoining of the recombining DNA molecules. The XerC-XerD complex is essential to convert dimers of the bacterial chromosome into monomers to permit their segregation at cell division. It also contributes to the segregational stability of plasmids. This Pelotomaculum thermopropionicum (strain DSM 13744 / JCM 10971 / SI) protein is Tyrosine recombinase XerC.